Consider the following 169-residue polypeptide: Protein-export protein SecB (169 aa).

It belongs to the SecB family. As to quaternary structure, homotetramer, a dimer of dimers. One homotetramer interacts with 1 SecA dimer.

It localises to the cytoplasm. Its function is as follows. One of the proteins required for the normal export of preproteins out of the cell cytoplasm. It is a molecular chaperone that binds to a subset of precursor proteins, maintaining them in a translocation-competent state. It also specifically binds to its receptor SecA. This is Protein-export protein SecB from Haemophilus influenzae (strain 86-028NP).